We begin with the raw amino-acid sequence, 416 residues long: Lipid phosphate phosphatase delta (416 aa).

2 helical membrane passes run phenylalanine 72–leucine 92 and methionine 104–alanine 124. The phosphatase sequence motif I stretch occupies residues lysine 119–proline 127. Residues proline 151–histidine 154 are phosphatase sequence motif II. Residue histidine 154 is the Proton donor of the active site. Residues valine 178–glycine 198 traverse the membrane as a helical segment. Positions glycine 198 to aspartate 209 are phosphatase sequence motif III. Catalysis depends on histidine 205, which acts as the Nucleophile. The next 5 membrane-spanning stretches (helical) occupy residues valine 207 to valine 227, valine 241 to histidine 261, tyrosine 266 to threonine 286, glutamate 302 to valine 322, and phenylalanine 393 to tyrosine 413.

It belongs to the type 2 lipid phosphate phosphatase family.

It is found in the endoplasmic reticulum membrane. Functions as a sphingoid long-chain base phosphate (LCBP) phosphatase. May play a role in the regulation of LCBP levels and be involved in stomatal responses through LCBP-mediated ABA signaling. In Arabidopsis thaliana (Mouse-ear cress), this protein is Lipid phosphate phosphatase delta (LPPD).